A 417-amino-acid polypeptide reads, in one-letter code: Tyrosine--tRNA ligase (417 aa).

Y34 contributes to the L-tyrosine binding site. Residues 39–48 (PTGDSMHIGH) carry the 'HIGH' region motif. L-tyrosine-binding residues include Y165 and Q169. The 'KMSKS' region signature appears at 227-231 (KFGKS). Position 230 (K230) interacts with ATP. One can recognise an S4 RNA-binding domain in the interval 349–417 (ENIVLWLVDT…KKKYFLARVK (69 aa)).

The protein belongs to the class-I aminoacyl-tRNA synthetase family. TyrS type 1 subfamily. As to quaternary structure, homodimer.

The protein resides in the cytoplasm. It carries out the reaction tRNA(Tyr) + L-tyrosine + ATP = L-tyrosyl-tRNA(Tyr) + AMP + diphosphate + H(+). Functionally, catalyzes the attachment of tyrosine to tRNA(Tyr) in a two-step reaction: tyrosine is first activated by ATP to form Tyr-AMP and then transferred to the acceptor end of tRNA(Tyr). This is Tyrosine--tRNA ligase from Pediococcus pentosaceus (strain ATCC 25745 / CCUG 21536 / LMG 10740 / 183-1w).